A 629-amino-acid polypeptide reads, in one-letter code: Hemocyanin C chain (629 aa).

Residues His175, His179, His206, His326, His330, and His366 each contribute to the Cu cation site. The N-linked (GlcNAc...) asparagine glycan is linked to Asn451. Cys537 and Cys585 are disulfide-bonded. Asn618 carries N-linked (GlcNAc...) asparagine glycosylation.

It belongs to the tyrosinase family. Hemocyanin subfamily. Tarantula hemocyanin is a 24-chain polymer with seven different chains identified. In terms of tissue distribution, hemolymph.

It localises to the secreted. It is found in the extracellular space. In terms of biological role, hemocyanins are copper-containing oxygen carriers occurring freely dissolved in the hemolymph of many mollusks and arthropods. This Aphonopelma sp. (American tarantula) protein is Hemocyanin C chain (HCC).